Reading from the N-terminus, the 763-residue chain is Sphingoid long-chain bases kinase 1 (763 aa).

The interval 34–81 is disordered; it reads TGGSQQSSPIVFPEKRNKKVKASSRRGEVTNDPQVKPKPDEHRIDIGG. Residues 58-81 are compositionally biased toward basic and acidic residues; the sequence is RRGEVTNDPQVKPKPDEHRIDIGG. One can recognise a DAGKc domain in the interval 245 to 384; it reads KSAPKMLVIL…TDVFAVEWIH (140 aa). Residues 255-257 and threonine 287 each bind ATP; that span reads NPR. A substrate-binding site is contributed by 313 to 316; that stretch reads GGDG. The active-site Proton donor/acceptor is aspartate 315. ATP-binding positions include glutamate 320, 345 to 347, and arginine 418; that span reads GSD. The tract at residues 561–603 is disordered; sequence MGLTSVQDPPTRCSWGNTGGQDREDISSTVSDPGPIWDAGPKW. 733-735 contributes to the ATP binding site; it reads DGE.

As to expression, expressed in roots, stems, leaves and at higher levels in flowers.

In terms of biological role, involved in the production of sphingolipid metabolites. Active on sphingosine, phytosphingosine (PHS, 4-hydroxysphinganine), D-erythro-dihydrosphingosine, D-erythro-sphingosine and trans-4, trans-8-sphingadienine, an LCB found exclusively in plants, but not on N-acetyl-dihydrosphingosine (C2-dihydroceramide) and D-threo-dihydrosphingosine. The polypeptide is Sphingoid long-chain bases kinase 1 (LCBK1) (Arabidopsis thaliana (Mouse-ear cress)).